The primary structure comprises 347 residues: Glycerol-3-phosphate dehydrogenase [NAD(P)+] (347 aa).

NADPH contacts are provided by W20, R39, and K118. Positions 118, 152, and 154 each coordinate sn-glycerol 3-phosphate. A156 serves as a coordination point for NADPH. 5 residues coordinate sn-glycerol 3-phosphate: K207, D260, S270, R271, and N272. The active-site Proton acceptor is K207. R271 contributes to the NADPH binding site. Residues V295 and E297 each contribute to the NADPH site.

The protein belongs to the NAD-dependent glycerol-3-phosphate dehydrogenase family.

Its subcellular location is the cytoplasm. The catalysed reaction is sn-glycerol 3-phosphate + NAD(+) = dihydroxyacetone phosphate + NADH + H(+). It carries out the reaction sn-glycerol 3-phosphate + NADP(+) = dihydroxyacetone phosphate + NADPH + H(+). It participates in membrane lipid metabolism; glycerophospholipid metabolism. Functionally, catalyzes the reduction of the glycolytic intermediate dihydroxyacetone phosphate (DHAP) to sn-glycerol 3-phosphate (G3P), the key precursor for phospholipid synthesis. In Cupriavidus pinatubonensis (strain JMP 134 / LMG 1197) (Cupriavidus necator (strain JMP 134)), this protein is Glycerol-3-phosphate dehydrogenase [NAD(P)+].